Reading from the N-terminus, the 154-residue chain is Crossover junction endodeoxyribonuclease RuvC (154 aa).

Residues aspartate 7, glutamate 67, and aspartate 139 contribute to the active site. Mg(2+) contacts are provided by aspartate 7, glutamate 67, and aspartate 139.

This sequence belongs to the RuvC family. In terms of assembly, homodimer which binds Holliday junction (HJ) DNA. The HJ becomes 2-fold symmetrical on binding to RuvC with unstacked arms; it has a different conformation from HJ DNA in complex with RuvA. In the full resolvosome a probable DNA-RuvA(4)-RuvB(12)-RuvC(2) complex forms which resolves the HJ. Mg(2+) serves as cofactor.

It is found in the cytoplasm. The catalysed reaction is Endonucleolytic cleavage at a junction such as a reciprocal single-stranded crossover between two homologous DNA duplexes (Holliday junction).. Functionally, the RuvA-RuvB-RuvC complex processes Holliday junction (HJ) DNA during genetic recombination and DNA repair. Endonuclease that resolves HJ intermediates. Cleaves cruciform DNA by making single-stranded nicks across the HJ at symmetrical positions within the homologous arms, yielding a 5'-phosphate and a 3'-hydroxyl group; requires a central core of homology in the junction. The consensus cleavage sequence is 5'-(A/T)TT(C/G)-3'. Cleavage occurs on the 3'-side of the TT dinucleotide at the point of strand exchange. HJ branch migration catalyzed by RuvA-RuvB allows RuvC to scan DNA until it finds its consensus sequence, where it cleaves and resolves the cruciform DNA. In Prochlorococcus marinus (strain MIT 9303), this protein is Crossover junction endodeoxyribonuclease RuvC.